A 327-amino-acid polypeptide reads, in one-letter code: Eukaryotic translation initiation factor 3 subunit I (327 aa).

5 WD repeats span residues 8 to 49 (GHER…GSYD), 51 to 89 (HNGA…CLYT), 188 to 227 (VHRY…KLKQ), 229 to 268 (KSER…GHFE), and 285 to 324 (GHFG…LGFT).

It belongs to the eIF-3 subunit I family. In terms of assembly, component of the eukaryotic translation initiation factor 3 (eIF-3) complex.

The protein localises to the cytoplasm. In terms of biological role, component of the eukaryotic translation initiation factor 3 (eIF-3) complex, which is involved in protein synthesis of a specialized repertoire of mRNAs and, together with other initiation factors, stimulates binding of mRNA and methionyl-tRNAi to the 40S ribosome. The eIF-3 complex specifically targets and initiates translation of a subset of mRNAs involved in cell proliferation. This is Eukaryotic translation initiation factor 3 subunit I from Caenorhabditis elegans.